We begin with the raw amino-acid sequence, 462 residues long: Transcription initiation factor TFIID subunit 7-like (462 aa).

2 disordered regions span residues M1 to E97 and D327 to Y366. Low complexity-rich tracts occupy residues S16–E30 and D66–A77. Positions D333–E365 are enriched in acidic residues. The stretch at D342–K462 forms a coiled coil.

Belongs to the TAF7 family. In terms of assembly, TFIID is composed of TATA binding protein (TBP) and a number of TBP-associated factors (TAFs). TAF7L may replace TAF7 in a spermatogenesis-specific form of TFIID. Interacts with TBP; the interaction occurs in a sub-population of cells (pachytene and haploid round spermatids) and is developmentally regulated through differential intracellular localization of the two proteins. Interacts with TAF1. In terms of tissue distribution, testis-specific.

Its subcellular location is the nucleus. It localises to the cytoplasm. Its function is as follows. Probably functions as a spermatogenesis-specific component of the DNA-binding general transcription factor complex TFIID, a multimeric protein complex that plays a central role in mediating promoter responses to various activators and repressors. May play a role in spermatogenesis. The polypeptide is Transcription initiation factor TFIID subunit 7-like (TAF7L) (Homo sapiens (Human)).